An 89-amino-acid chain; its full sequence is Small ribosomal subunit protein uS15 (89 aa).

The segment covering 1–21 (MAITQERKNQLINEFKTHESD) has biased composition (basic and acidic residues). Residues 1 to 24 (MAITQERKNQLINEFKTHESDTGS) are disordered.

This sequence belongs to the universal ribosomal protein uS15 family. Part of the 30S ribosomal subunit. Forms a bridge to the 50S subunit in the 70S ribosome, contacting the 23S rRNA.

Its function is as follows. One of the primary rRNA binding proteins, it binds directly to 16S rRNA where it helps nucleate assembly of the platform of the 30S subunit by binding and bridging several RNA helices of the 16S rRNA. Functionally, forms an intersubunit bridge (bridge B4) with the 23S rRNA of the 50S subunit in the ribosome. The protein is Small ribosomal subunit protein uS15 of Bacillus subtilis (strain 168).